Here is a 616-residue protein sequence, read N- to C-terminus: Chaperone protein HscA homolog (616 aa).

Belongs to the heat shock protein 70 family.

Its function is as follows. Chaperone involved in the maturation of iron-sulfur cluster-containing proteins. Has a low intrinsic ATPase activity which is markedly stimulated by HscB. This is Chaperone protein HscA homolog from Histophilus somni (strain 129Pt) (Haemophilus somnus).